The primary structure comprises 59 residues: Large ribosomal subunit protein uL30 (59 aa).

It belongs to the universal ribosomal protein uL30 family. As to quaternary structure, part of the 50S ribosomal subunit.

The protein is Large ribosomal subunit protein uL30 of Pelotomaculum thermopropionicum (strain DSM 13744 / JCM 10971 / SI).